We begin with the raw amino-acid sequence, 120 residues long: Purkinje cell protein 2 (120 aa).

GoLoco domains follow at residues 7–29 (QEGF…RCSL) and 47–69 (MDNL…RVTV). Positions 16–120 (HVQGDRMEEQ…SSPQPQTQAP (105 aa)) are disordered. Residues 108–120 (RRNSSPQPQTQAP) show a composition bias toward polar residues. Ser-111 bears the Phosphoserine mark.

Cerebellum (Purkinje cells) and retinal bipolar neurons.

Functionally, may function as a cell-type specific modulator for G protein-mediated cell signaling. This chain is Purkinje cell protein 2 (Pcp2), found in Mus musculus (Mouse).